A 578-amino-acid chain; its full sequence is Threonylcarbamoyladenosine tRNA methylthiotransferase (578 aa).

In terms of domain architecture, MTTase N-terminal spans 63-171; sequence QKIWIRTWGC…VVEVVEETIK (109 aa). Cys72 and Cys108 together coordinate [4Fe-4S] cluster. The residue at position 121 (Ser121) is a Phosphoserine. Residues Cys137, Cys213, Cys217, and Cys220 each coordinate [4Fe-4S] cluster. One can recognise a Radical SAM core domain in the interval 199 to 430; it reads RKNPLIEIIS…RVFHSYNPYD (232 aa). The TRAM domain occupies 430–492; it reads DHKIGERQQV…KHFLKGQPVS (63 aa). A Phosphothreonine modification is found at Thr498. The chain crosses the membrane as a helical span at residues 553–570; the sequence is CALKVATGLALLALLLHF.

It belongs to the methylthiotransferase family. CDKAL1 subfamily. [4Fe-4S] cluster is required as a cofactor. As to expression, expressed in pancreas, liver and skeletal muscle, especially in white muscle fibers.

It localises to the endoplasmic reticulum membrane. The catalysed reaction is N(6)-L-threonylcarbamoyladenosine(37) in tRNA + (sulfur carrier)-SH + AH2 + 2 S-adenosyl-L-methionine = 2-methylsulfanyl-N(6)-L-threonylcarbamoyladenosine(37) in tRNA + (sulfur carrier)-H + 5'-deoxyadenosine + L-methionine + A + S-adenosyl-L-homocysteine + 2 H(+). Functionally, catalyzes the methylthiolation of N6-threonylcarbamoyladenosine (t(6)A), leading to the formation of 2-methylthio-N6-threonylcarbamoyladenosine (ms(2)t(6)A) at position 37 in tRNAs that read codons beginning with adenine. The protein is Threonylcarbamoyladenosine tRNA methylthiotransferase (Cdkal1) of Mus musculus (Mouse).